Here is a 154-residue protein sequence, read N- to C-terminus: Endoribonuclease YbeY (154 aa).

Histidine 113, histidine 117, and histidine 123 together coordinate Zn(2+).

It belongs to the endoribonuclease YbeY family. It depends on Zn(2+) as a cofactor.

The protein resides in the cytoplasm. Its function is as follows. Single strand-specific metallo-endoribonuclease involved in late-stage 70S ribosome quality control and in maturation of the 3' terminus of the 16S rRNA. This is Endoribonuclease YbeY from Vibrio vulnificus (strain YJ016).